Reading from the N-terminus, the 427-residue chain is Glutamate-1-semialdehyde 2,1-aminomutase (427 aa).

Lysine 265 carries the post-translational modification N6-(pyridoxal phosphate)lysine.

It belongs to the class-III pyridoxal-phosphate-dependent aminotransferase family. HemL subfamily. As to quaternary structure, homodimer. The cofactor is pyridoxal 5'-phosphate.

The protein resides in the cytoplasm. It catalyses the reaction (S)-4-amino-5-oxopentanoate = 5-aminolevulinate. It participates in porphyrin-containing compound metabolism; protoporphyrin-IX biosynthesis; 5-aminolevulinate from L-glutamyl-tRNA(Glu): step 2/2. In Colwellia psychrerythraea (strain 34H / ATCC BAA-681) (Vibrio psychroerythus), this protein is Glutamate-1-semialdehyde 2,1-aminomutase.